The following is a 103-amino-acid chain: Flagellar hook-basal body complex protein FliE (103 aa).

Belongs to the FliE family.

It localises to the bacterial flagellum basal body. This is Flagellar hook-basal body complex protein FliE from Photorhabdus laumondii subsp. laumondii (strain DSM 15139 / CIP 105565 / TT01) (Photorhabdus luminescens subsp. laumondii).